The chain runs to 161 residues: UPF0763 protein Cla_1130 (161 aa).

The protein belongs to the UPF0763 family.

This is UPF0763 protein Cla_1130 from Campylobacter lari (strain RM2100 / D67 / ATCC BAA-1060).